We begin with the raw amino-acid sequence, 421 residues long: 4'-demethylrebeccamycin synthase (421 aa).

The protein belongs to the glycosyltransferase 28 family.

It catalyses the reaction 4'-demethylrebeccamycin + H2O = dichloroarcyriaflavin A + beta-D-glucose. The protein operates within alkaloid biosynthesis. Catalyzes the penultimate step in the biosynthesis of rebeccamycin, an indolocarbazole alkaloid that inhibits topoisomerase 1. Has a wide substrate range, including staurosporine aglycone, EJG-III-108A, J-104303, 6-N-methyl-arcyriaflavin and indolo-[2,3-a]-carbazole. This chain is 4'-demethylrebeccamycin synthase (rebG), found in Lentzea aerocolonigenes (Lechevalieria aerocolonigenes).